The primary structure comprises 273 residues: Zinc finger protein AZF2 (273 aa).

Residues 33 to 64 form a disordered region; that stretch reads LKRKRSKRQRSHSPSSSSSSPPRSRPKSQNQD. Over residues 34-43 the composition is skewed to basic residues; that stretch reads KRKRSKRQRS. Low complexity predominate over residues 44-54; it reads HSPSSSSSSPP. C2H2-type zinc fingers lie at residues 106 to 128 and 165 to 187; these read YKCN…KASH and HECS…KRCH. The interval 195–215 is disordered; that stretch reads GGGGGSKSISHSGSVSSTVSE. A compositionally biased stretch (low complexity) spans 201-213; it reads KSISHSGSVSSTV.

Expressed in roots, radicles, cotyledons, hypocotyls, leaf veins, stems, sepals, petals, stamens, placenta, funiculi and maturated seeds.

The protein localises to the nucleus. Its function is as follows. Transcriptional repressor involved in the inhibition of plant growth under abiotic stress conditions. Can repress the expression of various genes, including osmotic stress and abscisic acid-repressive genes and auxin-inducible genes, by binding to their promoter regions in a DNA sequence-specific manner. Acts as a negative regulator of abscisic acid (ABA) signaling during seed germination. Probably involved in jasmonate (JA) early signaling response. May regulate the expression of the JA biosynthesis gene LOX3 and control the expression of TIFY10A/JAZ1, a key repressor in the JA signaling cascade. May act as a positive regulator of leaf senescence. Has been identified as a suppressor of the deficiency of yeast snf4 mutant to grow on non-fermentable carbon source. The chain is Zinc finger protein AZF2 (AZF2) from Arabidopsis thaliana (Mouse-ear cress).